Consider the following 161-residue polypeptide: 2-C-methyl-D-erythritol 2,4-cyclodiphosphate synthase (161 aa).

2 residues coordinate a divalent metal cation: aspartate 8 and histidine 10. Residues 8 to 10 (DLH) and 34 to 35 (HS) each bind 4-CDP-2-C-methyl-D-erythritol 2-phosphate. Residue histidine 42 participates in a divalent metal cation binding. 4-CDP-2-C-methyl-D-erythritol 2-phosphate is bound by residues 56-58 (DIG) and arginine 142.

The protein belongs to the IspF family. As to quaternary structure, homotrimer. A divalent metal cation serves as cofactor.

The enzyme catalyses 4-CDP-2-C-methyl-D-erythritol 2-phosphate = 2-C-methyl-D-erythritol 2,4-cyclic diphosphate + CMP. It participates in isoprenoid biosynthesis; isopentenyl diphosphate biosynthesis via DXP pathway; isopentenyl diphosphate from 1-deoxy-D-xylulose 5-phosphate: step 4/6. Involved in the biosynthesis of isopentenyl diphosphate (IPP) and dimethylallyl diphosphate (DMAPP), two major building blocks of isoprenoid compounds. Catalyzes the conversion of 4-diphosphocytidyl-2-C-methyl-D-erythritol 2-phosphate (CDP-ME2P) to 2-C-methyl-D-erythritol 2,4-cyclodiphosphate (ME-CPP) with a corresponding release of cytidine 5-monophosphate (CMP). The polypeptide is 2-C-methyl-D-erythritol 2,4-cyclodiphosphate synthase (Treponema denticola (strain ATCC 35405 / DSM 14222 / CIP 103919 / JCM 8153 / KCTC 15104)).